The following is a 168-amino-acid chain: MSRSRINGNFIDKTFSIVANILLRIIPTTSGEKEAFTYYRDGMSAQSEGNYAEALQNYYEAMRLEIDPYDRSYILYNIGLIHTSNGEHTKALEYYFRALERNPFLPQAFNNMAVICHYRGEQAIRQGDSEIAEAWFDQAAEYWKQAIALTPGNYIEAHNWLKITRRFE.

TPR repeat units follow at residues 35-68 (AFTYYRDGMSAQSEGNYAEALQNYYEAMRLEIDP), 72-105 (SYILYNIGLIHTSNGEHTKALEYYFRALERNPFL), and 120-153 (GEQAIRQGDSEIAEAWFDQAAEYWKQAIALTPGN).

Belongs to the Ycf3 family.

It localises to the plastid. The protein localises to the chloroplast thylakoid membrane. Its function is as follows. Essential for the assembly of the photosystem I (PSI) complex. May act as a chaperone-like factor to guide the assembly of the PSI subunits. The chain is Photosystem I assembly protein Ycf3 from Helianthus annuus (Common sunflower).